Here is an 843-residue protein sequence, read N- to C-terminus: Protein translocase subunit SecA (843 aa).

ATP contacts are provided by residues Gln85, 103–107 (GEGKT), and Asp490. Residues 799–834 (KNAVENRSDDSLPKQPVKAEPRVGRNDPCPCGSGKK) are disordered. The span at 802–823 (VENRSDDSLPKQPVKAEPRVGR) shows a compositional bias: basic and acidic residues. 4 residues coordinate Zn(2+): Cys827, Cys829, Cys838, and Cys839.

The protein belongs to the SecA family. Monomer and homodimer. Part of the essential Sec protein translocation apparatus which comprises SecA, SecYEG and auxiliary proteins SecDF. Other proteins may also be involved. Zn(2+) is required as a cofactor.

Its subcellular location is the cell membrane. The protein localises to the cytoplasm. The enzyme catalyses ATP + H2O + cellular proteinSide 1 = ADP + phosphate + cellular proteinSide 2.. Part of the Sec protein translocase complex. Interacts with the SecYEG preprotein conducting channel. Has a central role in coupling the hydrolysis of ATP to the transfer of proteins into and across the cell membrane, serving as an ATP-driven molecular motor driving the stepwise translocation of polypeptide chains across the membrane. The protein is Protein translocase subunit SecA of Heliobacterium modesticaldum (strain ATCC 51547 / Ice1).